Reading from the N-terminus, the 174-residue chain is UPF0340 protein MW2038 (174 aa).

It belongs to the UPF0340 family.

In Staphylococcus aureus (strain MW2), this protein is UPF0340 protein MW2038.